Here is a 221-residue protein sequence, read N- to C-terminus: 7-cyano-7-deazaguanine synthase (221 aa).

10–20 (FSGGQDSTTCL) is a binding site for ATP. Positions 186, 195, 198, and 201 each coordinate Zn(2+).

This sequence belongs to the QueC family. In terms of assembly, homodimer. Requires Zn(2+) as cofactor.

The enzyme catalyses 7-carboxy-7-deazaguanine + NH4(+) + ATP = 7-cyano-7-deazaguanine + ADP + phosphate + H2O + H(+). The protein operates within purine metabolism; 7-cyano-7-deazaguanine biosynthesis. Functionally, catalyzes the ATP-dependent conversion of 7-carboxy-7-deazaguanine (CDG) to 7-cyano-7-deazaguanine (preQ(0)). In Geobacillus kaustophilus (strain HTA426), this protein is 7-cyano-7-deazaguanine synthase.